The primary structure comprises 527 residues: Peptide chain release factor 3 (527 aa).

The tr-type G domain maps to 9-278 (NKRRTFAIIS…GLTQWAPKPQ (270 aa)). GTP is bound by residues 18-25 (SHPDAGKT), 86-90 (DTPGH), and 140-143 (NKLD).

It belongs to the TRAFAC class translation factor GTPase superfamily. Classic translation factor GTPase family. PrfC subfamily.

The protein localises to the cytoplasm. Increases the formation of ribosomal termination complexes and stimulates activities of RF-1 and RF-2. It binds guanine nucleotides and has strong preference for UGA stop codons. It may interact directly with the ribosome. The stimulation of RF-1 and RF-2 is significantly reduced by GTP and GDP, but not by GMP. The polypeptide is Peptide chain release factor 3 (Haemophilus influenzae (strain 86-028NP)).